A 443-amino-acid polypeptide reads, in one-letter code: MSYFGTDGIRGKFGEMPITPEFALKLGFAAGKVLKRTSPINKPIVVLGKDTRLSGYILESALQAGLNAAGVYVHLLGPLPTPAIAHLTRALHADAGIVISASHNPYFDNGIKFFSGEGKKLPDSLQDEINQELEHELHIEDTANLGKSVRLIDANGRYIEFCKSTFPYHFDLRNLTIVVDCANGAAYNVGPSVFRELGAKVIALYNDPNGMNINEHCGSTHPENLQKAVVHYKADLGIAFDGDADRVILVDKFGELVDGDHILYILATQAKKKPAGIVGTVMSNMALELALAKADVPFIRAKVGDRYVLQALEENDWVTGGEPSGHILTLDKSTTGDAIIAALQVLTVMVEQNKALHELVTGFELFPQVLVNVRLDQMMDPYSVPALVSEFEQAEAQLKGRGRLLIRKSGTEPVIRVMVEGDNQKEVTDLAHRLAESVRTHAA.

The active-site Phosphoserine intermediate is Ser102. Residues Ser102, Asp241, Asp243, and Asp245 each coordinate Mg(2+). A Phosphoserine modification is found at Ser102.

This sequence belongs to the phosphohexose mutase family. Mg(2+) serves as cofactor. Activated by phosphorylation.

It carries out the reaction alpha-D-glucosamine 1-phosphate = D-glucosamine 6-phosphate. Catalyzes the conversion of glucosamine-6-phosphate to glucosamine-1-phosphate. The chain is Phosphoglucosamine mutase from Acinetobacter baylyi (strain ATCC 33305 / BD413 / ADP1).